The chain runs to 669 residues: DNA ligase (669 aa).

NAD(+)-binding positions include 33-37 (DVTYD), 82-83 (SL), and Glu-115. Residue Lys-117 is the N6-AMP-lysine intermediate of the active site. Residues Arg-138, Glu-172, Lys-286, and Lys-310 each coordinate NAD(+). The Zn(2+) site is built by Cys-401, Cys-404, Cys-417, and Cys-422. Residues 589-669 (IDSSFLFGKK…DIKNLVNLDD (81 aa)) form the BRCT domain.

Belongs to the NAD-dependent DNA ligase family. LigA subfamily. It depends on Mg(2+) as a cofactor. The cofactor is Mn(2+).

The catalysed reaction is NAD(+) + (deoxyribonucleotide)n-3'-hydroxyl + 5'-phospho-(deoxyribonucleotide)m = (deoxyribonucleotide)n+m + AMP + beta-nicotinamide D-nucleotide.. DNA ligase that catalyzes the formation of phosphodiester linkages between 5'-phosphoryl and 3'-hydroxyl groups in double-stranded DNA using NAD as a coenzyme and as the energy source for the reaction. It is essential for DNA replication and repair of damaged DNA. The polypeptide is DNA ligase (Borrelia recurrentis (strain A1)).